Reading from the N-terminus, the 143-residue chain is Large ribosomal subunit protein uL11 (143 aa).

This sequence belongs to the universal ribosomal protein uL11 family. Part of the ribosomal stalk of the 50S ribosomal subunit. Interacts with L10 and the large rRNA to form the base of the stalk. L10 forms an elongated spine to which L12 dimers bind in a sequential fashion forming a multimeric L10(L12)X complex. One or more lysine residues are methylated.

Functionally, forms part of the ribosomal stalk which helps the ribosome interact with GTP-bound translation factors. The chain is Large ribosomal subunit protein uL11 from Salinispora tropica (strain ATCC BAA-916 / DSM 44818 / JCM 13857 / NBRC 105044 / CNB-440).